The sequence spans 186 residues: Elongation factor P (186 aa).

Belongs to the elongation factor P family.

It is found in the cytoplasm. Its pathway is protein biosynthesis; polypeptide chain elongation. In terms of biological role, involved in peptide bond synthesis. Stimulates efficient translation and peptide-bond synthesis on native or reconstituted 70S ribosomes in vitro. Probably functions indirectly by altering the affinity of the ribosome for aminoacyl-tRNA, thus increasing their reactivity as acceptors for peptidyl transferase. The chain is Elongation factor P from Streptococcus thermophilus (strain CNRZ 1066).